A 663-amino-acid chain; its full sequence is Endopolyphosphatase (663 aa).

Topologically, residues 1–14 are cytoplasmic; that stretch reads MAVNEKDVGRKSRV. The helical; Signal-anchor for type II membrane protein transmembrane segment at 15 to 35 threads the bilayer; that stretch reads SVVLWVFIALGTLFLCKNAFT. Residues 36–663 lie on the Vacuolar side of the membrane; it reads FSSESIHGLK…ISTGYEDERN (628 aa). N-linked (GlcNAc...) asparagine glycosylation is found at N487 and N526. Residues 534 to 564 are disordered; that stretch reads SAEQNKKKKKKNGKPDKSIPRKKPDELPAGP. Basic and acidic residues predominate over residues 546 to 559; that stretch reads GKPDKSIPRKKPDE.

It belongs to the endopolyphosphatase PPN1 family. It depends on a divalent metal cation as a cofactor. In terms of processing, processing by proteases in the vacuole may be required for activation.

It localises to the vacuole membrane. The enzyme catalyses [phosphate](n+1) + n H2O = (n+1) phosphate + n H(+). Functionally, catalyzes the hydrolysis of inorganic polyphosphate (polyP) chains of many hundreds of phosphate residues into shorter lengths. The protein is Endopolyphosphatase (PPN1) of Candida glabrata (strain ATCC 2001 / BCRC 20586 / JCM 3761 / NBRC 0622 / NRRL Y-65 / CBS 138) (Yeast).